The following is a 151-amino-acid chain: Probable cGMP 3',5'-cyclic phosphodiesterase subunit delta (151 aa).

It belongs to the PDE6D/unc-119 family. Interacts with Pde6.

It is found in the nucleus. Its subcellular location is the cytoplasm. The chain is Probable cGMP 3',5'-cyclic phosphodiesterase subunit delta from Drosophila virilis (Fruit fly).